We begin with the raw amino-acid sequence, 392 residues long: Probable tRNA sulfurtransferase (392 aa).

The region spanning 59 to 166 is the THUMP domain; sequence SCYREALKRV…DEGLFIYTTE (108 aa). Residues 186–187, 211–212, Arg-269, Gly-290, and Gln-299 each bind ATP; these read LL and YF.

The protein belongs to the ThiI family.

The protein localises to the cytoplasm. It catalyses the reaction [ThiI sulfur-carrier protein]-S-sulfanyl-L-cysteine + a uridine in tRNA + 2 reduced [2Fe-2S]-[ferredoxin] + ATP + H(+) = [ThiI sulfur-carrier protein]-L-cysteine + a 4-thiouridine in tRNA + 2 oxidized [2Fe-2S]-[ferredoxin] + AMP + diphosphate. The enzyme catalyses [ThiS sulfur-carrier protein]-C-terminal Gly-Gly-AMP + S-sulfanyl-L-cysteinyl-[cysteine desulfurase] + AH2 = [ThiS sulfur-carrier protein]-C-terminal-Gly-aminoethanethioate + L-cysteinyl-[cysteine desulfurase] + A + AMP + 2 H(+). The protein operates within cofactor biosynthesis; thiamine diphosphate biosynthesis. Catalyzes the ATP-dependent transfer of a sulfur to tRNA to produce 4-thiouridine in position 8 of tRNAs, which functions as a near-UV photosensor. Also catalyzes the transfer of sulfur to the sulfur carrier protein ThiS, forming ThiS-thiocarboxylate. This is a step in the synthesis of thiazole, in the thiamine biosynthesis pathway. The sulfur is donated as persulfide by IscS. The protein is Probable tRNA sulfurtransferase of Coxiella burnetii (strain RSA 493 / Nine Mile phase I).